A 262-amino-acid polypeptide reads, in one-letter code: Small ribosomal subunit protein eS1y (262 aa).

A compositionally biased stretch (basic residues) spans 1–18 (MAVGKNKRISKGRKGGKK). The tract at residues 1-21 (MAVGKNKRISKGRKGGKKKAV) is disordered.

The protein belongs to the eukaryotic ribosomal protein eS1 family. As to quaternary structure, component of the small ribosomal subunit. Mature ribosomes consist of a small (40S) and a large (60S) subunit. The 40S subunit contains about 33 different proteins and 1 molecule of RNA (18S). The 60S subunit contains about 49 different proteins and 3 molecules of RNA (25S, 5.8S and 5S).

The protein localises to the cytoplasm. In Arabidopsis thaliana (Mouse-ear cress), this protein is Small ribosomal subunit protein eS1y.